Reading from the N-terminus, the 184-residue chain is UPF0149 protein PputW619_5026 (184 aa).

The protein belongs to the UPF0149 family.

This is UPF0149 protein PputW619_5026 from Pseudomonas putida (strain W619).